A 349-amino-acid polypeptide reads, in one-letter code: MSKAIKILLPLLLFSLSLQAERIKDIANIVGVRDNQLIGYGLVVGLNGTGDKTTSKFTMQSIANMLESVNVKIDADDIKSKNVAAVMVTAKLPPFSRQGDKVDVLVSSIGDAKSLEGGTLILTPLTGVDGRIYATSQGAISIGGKNERGGGVNHPLAGMLYGGAIIEREIPLDLYSKTGATLSLKSSNFQNAARVQESLNQNFGTQVAIAIDPRTIKLQRPESMSMVEFLARVEEVEIDYNRENKIVIDERTGTVVAGVGVKVGPVVVTHGEITIKITPEMSADNGAMDMGEGIKLSLNTNTLSTSGQTPTVSSVARALQRMGATPKDVISILEAIKRSGAISADLEIL.

An N-terminal signal peptide occupies residues 1–20; it reads MSKAIKILLPLLLFSLSLQA.

It belongs to the FlgI family. As to quaternary structure, the basal body constitutes a major portion of the flagellar organelle and consists of four rings (L,P,S, and M) mounted on a central rod.

Its subcellular location is the periplasm. The protein resides in the bacterial flagellum basal body. Functionally, assembles around the rod to form the L-ring and probably protects the motor/basal body from shearing forces during rotation. The sequence is that of Flagellar P-ring protein from Wolinella succinogenes (strain ATCC 29543 / DSM 1740 / CCUG 13145 / JCM 31913 / LMG 7466 / NCTC 11488 / FDC 602W) (Vibrio succinogenes).